The primary structure comprises 194 residues: Lytic chitin monooxygenase (194 aa).

The N-terminal stretch at 1–28 (MKKSLLTIVLAFSFVLGGAALAPTVSEA) is a signal peptide. Positions 29 and 114 each coordinate Cu cation. The Chitin-binding type-4 domain occupies 29 to 191 (HGYVASPGSR…VNAFYQAIDV (163 aa)).

Cu(2+) is required as a cofactor.

It localises to the secreted. It carries out the reaction [(1-&gt;4)-N-acetyl-beta-D-glucosaminyl]n+m + reduced acceptor + O2 = [(1-&gt;4)-N-acetyl-beta-D-glucosaminyl]m-1-(1-&gt;4)-2-(acetylamino)-2-deoxy-D-glucono-1,5-lactone + [(1-&gt;4)-N-acetyl-beta-D-glucosaminyl]n + acceptor + H2O.. Its pathway is glycan degradation; chitin degradation. In terms of biological role, involved in chitin degradation. Catalyzes the oxidative cleavage of glycosidic bonds in both alpha- and beta-chitin via a copper-dependent mechanism, leading to oxidized chitooligosaccharides with a dominance of even-numbered products. Acts synergistically with the chitinase EfChi18A, and combining the two enzymes leads to rapid and complete depolymerization of crystalline chitin, especially with beta-chitin as a substrate. Is likely involved in a chitin degradation pathway that allows E.faecalis V583 to grow on chitin as a carbon source. The protein is Lytic chitin monooxygenase of Enterococcus faecalis (strain ATCC 700802 / V583).